We begin with the raw amino-acid sequence, 185 residues long: ATP synthase subunit delta (185 aa).

This sequence belongs to the ATPase delta chain family. In terms of assembly, F-type ATPases have 2 components, F(1) - the catalytic core - and F(0) - the membrane proton channel. F(1) has five subunits: alpha(3), beta(3), gamma(1), delta(1), epsilon(1). F(0) has three main subunits: a(1), b(2) and c(10-14). The alpha and beta chains form an alternating ring which encloses part of the gamma chain. F(1) is attached to F(0) by a central stalk formed by the gamma and epsilon chains, while a peripheral stalk is formed by the delta and b chains.

Its subcellular location is the cell inner membrane. F(1)F(0) ATP synthase produces ATP from ADP in the presence of a proton or sodium gradient. F-type ATPases consist of two structural domains, F(1) containing the extramembraneous catalytic core and F(0) containing the membrane proton channel, linked together by a central stalk and a peripheral stalk. During catalysis, ATP synthesis in the catalytic domain of F(1) is coupled via a rotary mechanism of the central stalk subunits to proton translocation. In terms of biological role, this protein is part of the stalk that links CF(0) to CF(1). It either transmits conformational changes from CF(0) to CF(1) or is implicated in proton conduction. In Coxiella burnetii (strain CbuK_Q154) (Coxiella burnetii (strain Q154)), this protein is ATP synthase subunit delta.